Reading from the N-terminus, the 982-residue chain is Polyribonucleotide nucleotidyltransferase 2, mitochondrial (982 aa).

A mitochondrion-targeting transit peptide spans 1-39; it reads MSMAVASLRLLARGGRRRARFPAPLSVPGGRAAFLSGAA. The KH domain occupies 624 to 678; that stretch reads PRLATLSFSSDSLRKLLFHRKKIEQETGARVSVSDGTVTIVAKTQPIMDKAIEKV. An S1 motif 1 domain is found at 689 to 757; sequence GRTYKGVVSS…LRGNIKLSLK (69 aa). Disordered stretches follow at residues 792–814 and 832–892; these read PSKDANAEPSISKDEDNMIEETP and QDVT…NDVL. Low complexity-rich tracts occupy residues 846 to 855 and 868 to 877; these read AKSSPKLSKP and KKTSGASTTA. The region spanning 920–982 is the S1 motif 2 domain; it reads GDVVTAKVYQ…KGIPVFSLLD (63 aa).

Belongs to the polyribonucleotide nucleotidyltransferase family.

Its subcellular location is the mitochondrion. It catalyses the reaction RNA(n+1) + phosphate = RNA(n) + a ribonucleoside 5'-diphosphate. In terms of biological role, involved in the 3'-end maturation of mitochondrial mRNAs, rRNAs and tRNAs. Functions as a poly(A) mRNA 3'-5' degrading phosphorylase. This is Polyribonucleotide nucleotidyltransferase 2, mitochondrial (PNP2) from Oryza sativa subsp. japonica (Rice).